The primary structure comprises 461 residues: Flavin-containing monooxygenase FMO GS-OX-like 8 (461 aa).

20 to 25 serves as a coordination point for FAD; sequence GAGPSG. Position 220–225 (220–225) interacts with NADP(+); sequence GCSMSG.

The protein belongs to the FMO family. Interacts with EER5. Requires FAD as cofactor.

Catalyzes the conversion of methylthioalkyl glucosinolates of any chain length into methylsulfinylalkyl glucosinolates. The sequence is that of Flavin-containing monooxygenase FMO GS-OX-like 8 from Arabidopsis thaliana (Mouse-ear cress).